Here is a 213-residue protein sequence, read N- to C-terminus: Outer envelope pore protein 24B, chloroplastic (213 aa).

At 1–3 the chain is on the cytoplasmic side; that stretch reads MAM. A beta stranded membrane pass occupies residues 4 to 13; it reads KASIKGKYDT. Residues 14 to 18 are Chloroplast intermembrane-facing; the sequence is DKTSG. Residues 19–28 traverse the membrane as a beta stranded segment; it reads IGSLAFNAGD. Residues 29-32 are Cytoplasmic-facing; sequence IKLR. A beta stranded membrane pass occupies residues 33–42; the sequence is ATMTDATLVA. At 43-55 the chain is on the chloroplast intermembrane side; sequence GPTLTGLALAVEK. Residues 56–64 traverse the membrane as a beta stranded segment; sequence PGSFIVEYN. Residues 65–70 lie on the Cytoplasmic side of the membrane; sequence VPKKDV. Residues 71–80 traverse the membrane as a beta stranded segment; that stretch reads RFQFMNTVRI. Over 81–93 the chain is Chloroplast intermembrane; that stretch reads AEKPLNLTYIHSR. A beta stranded transmembrane segment spans residues 94 to 103; it reads ADNRTIVDGS. Residues 104 to 108 are Cytoplasmic-facing; the sequence is LVIDS. The chain crosses the membrane as a beta stranded span at residues 109–118; that stretch reads ANKLSANHMV. At 119–122 the chain is on the chloroplast intermembrane side; that stretch reads GTNN. A beta stranded membrane pass occupies residues 123–132; it reads CKIKYTYAHG. The Cytoplasmic portion of the chain corresponds to 133–144; it reads GLATFEPCYDLA. Residues 145-156 traverse the membrane as a beta stranded segment; sequence KNTWDFAVSRRF. The Chloroplast intermembrane portion of the chain corresponds to 157–159; the sequence is YSG. The beta stranded transmembrane segment at 160–168 threads the bilayer; the sequence is DNVRATYQT. The Cytoplasmic segment spans residues 169-170; the sequence is SS. Residues 171–179 form a beta stranded membrane-spanning segment; sequence KLLGMEWSR. Over 180 to 201 the chain is Chloroplast intermembrane; the sequence is NNKASGFKVCASVNLADELKTP. Residues 202–211 form a beta stranded membrane-spanning segment; that stretch reads KLTAETTWNL. Over 212–213 the chain is Cytoplasmic; it reads EM.

Belongs to the plastid outer envelope porin OEP24 (TC 1.B.28) family. Homooligomers form large rather nonselective pores in plastidial outer membranes.

It is found in the plastid. It localises to the etioplast membrane. The protein localises to the chloroplast outer membrane. High-conductance voltage-dependent solute channel with a slight selectivity for cations transporting triosephosphates, dicarboxylic acids, ATP, inorganic phosphate (Pi), sugars, and positively or negatively charged amino acids. In Arabidopsis thaliana (Mouse-ear cress), this protein is Outer envelope pore protein 24B, chloroplastic (OEP24B).